A 297-amino-acid chain; its full sequence is tRNA-cytidine(32) 2-sulfurtransferase (297 aa).

A PP-loop motif motif is present at residues 61 to 66; the sequence is SGGKDS. Residues cysteine 136, cysteine 139, and cysteine 227 each coordinate [4Fe-4S] cluster.

It belongs to the TtcA family. As to quaternary structure, homodimer. Mg(2+) is required as a cofactor. It depends on [4Fe-4S] cluster as a cofactor.

It localises to the cytoplasm. It catalyses the reaction cytidine(32) in tRNA + S-sulfanyl-L-cysteinyl-[cysteine desulfurase] + AH2 + ATP = 2-thiocytidine(32) in tRNA + L-cysteinyl-[cysteine desulfurase] + A + AMP + diphosphate + H(+). It functions in the pathway tRNA modification. Its function is as follows. Catalyzes the ATP-dependent 2-thiolation of cytidine in position 32 of tRNA, to form 2-thiocytidine (s(2)C32). The sulfur atoms are provided by the cysteine/cysteine desulfurase (IscS) system. This chain is tRNA-cytidine(32) 2-sulfurtransferase, found in Paracoccus denitrificans (strain Pd 1222).